The chain runs to 112 residues: Ferredoxin-2 (112 aa).

2 consecutive 4Fe-4S ferredoxin-type domains span residues 2 to 30 (TYVV…YEGE) and 31 to 60 (NTLV…PDTE). The [3Fe-4S] cluster site is built by cysteine 9 and cysteine 17. Positions 21, 40, 43, and 46 each coordinate [4Fe-4S] cluster. Cysteine 50 is a binding site for [3Fe-4S] cluster. Positions 85–103 (DPMPDHKKYDGETGKREKY) are enriched in basic and acidic residues. A disordered region spans residues 85–112 (DPMPDHKKYDGETGKREKYFSPNPGTGD).

The cofactor is [4Fe-4S] cluster. [3Fe-4S] cluster is required as a cofactor.

Its function is as follows. Ferredoxins are iron-sulfur proteins that transfer electrons in a wide variety of metabolic reactions. The polypeptide is Ferredoxin-2 (fdxA) (Rhodobacter capsulatus (strain ATCC BAA-309 / NBRC 16581 / SB1003)).